Consider the following 147-residue polypeptide: Hemoglobin subunit beta-1 (147 aa).

N-acetylserine is present on Ser-2. In terms of domain architecture, Globin spans 3-147 (FLSAEEKGLV…VASALAHRYH (145 aa)). N6-succinyllysine is present on Lys-18. Phosphoserine occurs at positions 45 and 51. Lys-60 is subject to N6-succinyllysine. Positions 64 and 93 each coordinate heme b. Arg-105 carries the post-translational modification Asymmetric dimethylarginine.

It belongs to the globin family. Heterotetramer of two alpha chains and two beta chains. Red blood cells.

Its function is as follows. Involved in oxygen transport from the lung to the various peripheral tissues. This Panthera onca (Jaguar) protein is Hemoglobin subunit beta-1 (HBB1).